The following is a 187-amino-acid chain: Transmembrane protein 272 (187 aa).

The next 4 helical transmembrane spans lie at 21-41 (CFVV…FIGM), 52-72 (LIPL…SLLL), 107-127 (IHLL…YWVF), and 149-169 (LYLF…LLLL).

The protein localises to the membrane. The chain is Transmembrane protein 272 from Homo sapiens (Human).